A 194-amino-acid polypeptide reads, in one-letter code: Dof zinc finger protein DOF1.7 (194 aa).

The Dof-type zinc-finger motif lies at 33–87 (LKCPRCDSPNTKFCYYNNYNLSQPRHFCKNCRRYWTKGGALRNIPVGGGTRKSNK). 4 residues coordinate Zn(2+): Cys35, Cys38, Cys60, and Cys63. Residues 74 to 125 (RNIPVGGGTRKSNKRSGSSPSSNLKNQTVAEKPDHHGSGSEEKEERVSGQEM) are disordered. Residues 88-99 (RSGSSPSSNLKN) are compositionally biased toward low complexity. The segment covering 104-121 (EKPDHHGSGSEEKEERVS) has biased composition (basic and acidic residues).

It is found in the nucleus. Transcription factor that binds specifically to a 5'-AA[AG]G-3' consensus core sequence. The polypeptide is Dof zinc finger protein DOF1.7 (DOF1.7) (Arabidopsis thaliana (Mouse-ear cress)).